A 21-amino-acid chain; its full sequence is Bombinin-H4 (21 aa).

Ile2 carries the D-allo-isoleucine modification. Ile20 carries the post-translational modification Isoleucine amide.

It belongs to the bombinin family. In terms of tissue distribution, expressed by the skin glands.

Its subcellular location is the secreted. Functionally, has antimicrobial and hemolytic activities. This Bombina variegata (Yellow-bellied toad) protein is Bombinin-H4.